A 57-amino-acid chain; its full sequence is Mambaquaretin-7 (57 aa).

The 51-residue stretch at 5 to 55 (CELIVAAGPCMFFISAFYYSKGANKCYPFTYSGCRGNANRFKTIEECRRTC) folds into the BPTI/Kunitz inhibitor domain. 3 disulfide bridges follow: cysteine 5/cysteine 55, cysteine 14/cysteine 38, and cysteine 30/cysteine 51.

This sequence belongs to the venom Kunitz-type family. In terms of tissue distribution, expressed by the venom gland.

The protein localises to the secreted. In terms of biological role, the mixture of mambaquaretin-7 and mambaquaretin-8 interacts with vasopressin V2 receptor (V2R/AVPR2), probably in a selective manner. This mixture inhibits vasopressin binding human V2R in the nanomolar range (Ki=3.14 nM), and also potently inhibits vasopressin-induced cAMP production (IC(50)=58 nM). In vivo, intraperitoneal injection of this protein into rats increases diuresis, without any loss of electrolytes. This chain is Mambaquaretin-7, found in Dendroaspis polylepis polylepis (Black mamba).